The primary structure comprises 326 residues: Putative nickel insertion protein (326 aa).

The protein belongs to the LarC family.

The sequence is that of Putative nickel insertion protein from Enterococcus faecalis (strain ATCC 700802 / V583).